We begin with the raw amino-acid sequence, 432 residues long: Adenylosuccinate synthetase (432 aa).

Residues 13 to 19 and 41 to 43 contribute to the GTP site; these read GDEGKGK and GHT. The Proton acceptor role is filled by Asp-14. Mg(2+)-binding residues include Asp-14 and Gly-41. IMP-binding positions include 14–17, 39–42, Thr-130, Arg-144, Gln-225, Thr-240, and Arg-304; these read DEGK and NAGH. His-42 functions as the Proton donor in the catalytic mechanism. 300–306 provides a ligand contact to substrate; it reads ATTGRKR. Residues Arg-306, 332-334, and 415-417 contribute to the GTP site; these read KLD and STG.

The protein belongs to the adenylosuccinate synthetase family. As to quaternary structure, homodimer. Mg(2+) serves as cofactor.

The protein localises to the cytoplasm. The catalysed reaction is IMP + L-aspartate + GTP = N(6)-(1,2-dicarboxyethyl)-AMP + GDP + phosphate + 2 H(+). The protein operates within purine metabolism; AMP biosynthesis via de novo pathway; AMP from IMP: step 1/2. Its function is as follows. Plays an important role in the de novo pathway of purine nucleotide biosynthesis. Catalyzes the first committed step in the biosynthesis of AMP from IMP. This chain is Adenylosuccinate synthetase, found in Alteromonas mediterranea (strain DSM 17117 / CIP 110805 / LMG 28347 / Deep ecotype).